We begin with the raw amino-acid sequence, 279 residues long: Phenylalanine 3-hydroxylase (279 aa).

His140, His145, and Glu186 together coordinate Fe cation.

Belongs to the biopterin-dependent aromatic amino acid hydroxylase family. The cofactor is Fe(2+).

The catalysed reaction is (6R)-L-erythro-5,6,7,8-tetrahydrobiopterin + L-phenylalanine + O2 = 3-hydroxy-L-phenylalanine + (4aS,6R)-4a-hydroxy-L-erythro-5,6,7,8-tetrahydrobiopterin. In vitro, catalyzes the highly regiospecific C-3 hydroxylation of L-phenylalanine (L-Phe) to yield 3-hydroxy-L-phenylalanine (meta-Tyr), an amino acid found in bacterial secondary metabolites such as sanglifehrin A and some pacidamycins. Tetrahydrobiopterin (BH4) seems to be the physiological pterin, however the hydroxylase is also able to use 6-methyltetrahydropterin (6-MePH4). This Streptomyces coeruleorubidus protein is Phenylalanine 3-hydroxylase.